The sequence spans 154 residues: UPF0178 protein Gbem_2221 (154 aa).

This sequence belongs to the UPF0178 family.

The chain is UPF0178 protein Gbem_2221 from Citrifermentans bemidjiense (strain ATCC BAA-1014 / DSM 16622 / JCM 12645 / Bem) (Geobacter bemidjiensis).